We begin with the raw amino-acid sequence, 597 residues long: MERPAPLAVLPFSDPAHALSLLRGLSQLRAERKFLDVTLEAAGGRDFPAHRAVLAAASPYFRAMFAGQLRESRAERVRLHGVPPDMLQLLLDFSYTGRVAVSGDNAEPLLRAADLLQFPAVKEACGAFLQQQLDLANCLDMQDFAEAFSCSGLASAAQRFILRHVGELGAEQLERLPLARLLRYLRDDGLCVPKEEAAYQLALRWVRADPPRRAAHWPQLLEAVRLPFVRRFYLLAHVEAEPLVARCPPCLRLLREARDFQAARYDRHDRGPCPRMRPRPSTGLAEILVLVGGCDQDCDELVTVDCYNPQTGQWRYLAEFPDHLGGGYSIVALGNDIYVTGGSDGSRLYDCVWRYNSSVNEWTEVAPMLKAREYHSSSVLNGLLYVVAADSTERYDHATDSWEALQPMTYPMDNCSTTACRGRLYAIGSLAGKETMVIQCYDPDTDLWSMVNCGQLPPWSFAPKTVTLNGLMYFVRDDSAEVDVYNPTKDEWDKIPSMNQVHVGGSLAALGGKLYVSGGYDNTFELSDVVEAYDPETRAWSVVGRLPEPTFWHGSVSIFRQFMPQTPAGGRGFELNSGSSDVDAGHHRLPQNPEELQ.

In terms of domain architecture, BTB spans 35–103; sequence LDVTLEAAGG…SYTGRVAVSG (69 aa). Residues 138–239 form the BACK domain; it reads CLDMQDFAEA…RRFYLLAHVE (102 aa). Kelch repeat units lie at residues 287-335, 336-382, 384-422, 423-470, 472-512, and 513-560; these read ILVL…ALGN, DIYV…VLNG, LYVVAADSTERYDHATDSWEALQPMTYPMDNCSTTACRG, RLYA…TLNG, MYFV…ALGG, and KLYV…SIFR. Positions 570-597 are disordered; it reads GRGFELNSGSSDVDAGHHRLPQNPEELQ.

In terms of assembly, component of the BCR(KLHL21) E3 ubiquitin ligase complex, at least composed of CUL3, KLHL21 and RBX1.

Its subcellular location is the cytoplasm. It localises to the cytoskeleton. It is found in the spindle. The protein operates within protein modification; protein ubiquitination. Substrate-specific adapter of BCR (BTB-CUL3-RBX1) E3 ubiquitin-protein ligase complex required for efficient chromosome alignment and cytokinesis. The BCR(KLHL21) E3 ubiquitin ligase complex regulates localization of the chromosomal passenger complex (CPC) from chromosomes to the spindle midzone in anaphase and mediates the ubiquitination of AURKB. Ubiquitination of AURKB by BCR(KLHL21) E3 ubiquitin ligase complex may not lead to its degradation by the proteasome. This is Kelch-like protein 21 (Klhl21) from Rattus norvegicus (Rat).